The chain runs to 83 residues: Three-finger toxin MALT0058C (83 aa).

An N-terminal signal peptide occupies residues 1-21 (MKTLLLTLVVVTIVCLDFGHT). Cystine bridges form between cysteine 24/cysteine 45, cysteine 38/cysteine 62, cysteine 64/cysteine 75, and cysteine 76/cysteine 81.

This sequence belongs to the three-finger toxin family. Short-chain subfamily. Type I alpha-neurotoxin sub-subfamily. Expressed by the venom gland.

The protein localises to the secreted. In terms of biological role, binds to muscle nicotinic acetylcholine receptor (nAChR) and inhibits acetylcholine from binding to the receptor, thereby impairing neuromuscular transmission. The polypeptide is Three-finger toxin MALT0058C (Micrurus altirostris (Uruguayan coral snake)).